We begin with the raw amino-acid sequence, 142 residues long: Hemoglobin subunit alpha (142 aa).

Residues 2–142 (VLSSQNKKAI…VAYELSSCYR (141 aa)) form the Globin domain. H60 serves as a coordination point for O2. Residue H89 participates in heme b binding.

It belongs to the globin family. In terms of assembly, heterotetramer of two alpha chains and two beta chains. Red blood cells.

Its function is as follows. Involved in oxygen transport from gills to the various peripheral tissues. This is Hemoglobin subunit alpha (hba) from Hemitrygon akajei (Red stingray).